We begin with the raw amino-acid sequence, 198 residues long: SCO2-like protein RF_0043 (198 aa).

It belongs to the SCO1/2 family.

The sequence is that of SCO2-like protein RF_0043 from Rickettsia felis (strain ATCC VR-1525 / URRWXCal2) (Rickettsia azadi).